The following is a 424-amino-acid chain: Histidine--tRNA ligase (424 aa).

This sequence belongs to the class-II aminoacyl-tRNA synthetase family. Homodimer.

The protein localises to the cytoplasm. The enzyme catalyses tRNA(His) + L-histidine + ATP = L-histidyl-tRNA(His) + AMP + diphosphate + H(+). The protein is Histidine--tRNA ligase of Shewanella woodyi (strain ATCC 51908 / MS32).